Here is a 284-residue protein sequence, read N- to C-terminus: uncharacterized protein (284 aa).

N79, N102, N111, N147, N162, N174, N196, N211, N228, and N234 each carry an N-linked (GlcNAc...) asparagine; by host glycan. Residues 239 to 259 (AFTYGSWGVAMLLFAAVMVLV) form a helical membrane-spanning segment.

The protein belongs to the RL11 family.

It is found in the membrane. This is an uncharacterized protein from Human cytomegalovirus (strain AD169) (HHV-5).